Here is a 381-residue protein sequence, read N- to C-terminus: 2-oxoglutarate-dependent dioxygenase FGSG_00048 (381 aa).

The protein belongs to the iron/ascorbate-dependent oxidoreductase family. Fe(2+) serves as cofactor.

Its pathway is mycotoxin biosynthesis. In terms of biological role, 2-oxoglutarate-dependent dioxygenase; part of the gene cluster that mediates the biosynthesis of gramillins A and B, bicyclic lipopeptides that induce cell death in maize leaves but not in wheat leaves. The nonribosomal peptide synthetase GRA1 incorporates respectively a glutamic adic (Glu), a leucine (Leu), a serine (Ser), a hydroxyglutamine (HOGln), a 2-amino decanoic acid, and 2 cysteins (CysB and CysA). The biosynthesis of 2-amino decanoic acid incorporated in gramillins could be initiated by a fatty acid synthase composed of the alpha and beta subunits FGSG_00036 and FGSG_11656. The cytochrome P450 monooxygenase FGSG_15680 could hydroxylate the fatty acid chain. Subsequent oxidation to the ketone by the oxidoreductase FGSG_00048 and transamination by aminotransferase FGSG_00049 could form 2-amino-decanoic acid. On the other hand, FGSG_15680 could also be responsible for the HO-modified glutamine at the gamma-position. Whether hydroxylation occurs on the fully assembled product or on the Gln residue prior to assembly into the gramillins requires further proof. The thioredoxin FGSG_00043 could also be required for the disulfide-bond formation between CysA and CysB. The specific involvement of the remaining proteins from the cluster is more difficult to discern, but could have broader regulatory (FGSG_00040 and FGSG_11657) or enzymatic functions (FGSG_00044 and FGSG_00045). The final C-domain of GRA1 does not possess the expected sequence of a termination CT domain, often implicated in macrocyclization and release of a cyclopeptidein fungal NRPs; and the thioesterase FGSG_00047 may act in concert with the terminal C-domain of GRA1 to catalyze the formation of the macrocyclic anhydride and release of the products. This chain is 2-oxoglutarate-dependent dioxygenase FGSG_00048, found in Gibberella zeae (strain ATCC MYA-4620 / CBS 123657 / FGSC 9075 / NRRL 31084 / PH-1) (Wheat head blight fungus).